The sequence spans 281 residues: Putative pyruvate, phosphate dikinase regulatory protein (281 aa).

Gly-153–Thr-160 provides a ligand contact to ADP.

Belongs to the pyruvate, phosphate/water dikinase regulatory protein family. PDRP subfamily.

The catalysed reaction is N(tele)-phospho-L-histidyl/L-threonyl-[pyruvate, phosphate dikinase] + ADP = N(tele)-phospho-L-histidyl/O-phospho-L-threonyl-[pyruvate, phosphate dikinase] + AMP + H(+). The enzyme catalyses N(tele)-phospho-L-histidyl/O-phospho-L-threonyl-[pyruvate, phosphate dikinase] + phosphate + H(+) = N(tele)-phospho-L-histidyl/L-threonyl-[pyruvate, phosphate dikinase] + diphosphate. Bifunctional serine/threonine kinase and phosphorylase involved in the regulation of the pyruvate, phosphate dikinase (PPDK) by catalyzing its phosphorylation/dephosphorylation. In Bdellovibrio bacteriovorus (strain ATCC 15356 / DSM 50701 / NCIMB 9529 / HD100), this protein is Putative pyruvate, phosphate dikinase regulatory protein.